The primary structure comprises 232 residues: Thiamine import ATP-binding protein ThiQ (232 aa).

Residues 2-230 (LKLTDITWLY…KASASALLGI (229 aa)) enclose the ABC transporter domain. 32 to 39 (GPSGAGKS) is a binding site for ATP.

Belongs to the ABC transporter superfamily. Thiamine importer (TC 3.A.1.19.1) family. As to quaternary structure, the complex is composed of two ATP-binding proteins (ThiQ), two transmembrane proteins (ThiP) and a solute-binding protein (ThiB).

The protein resides in the cell inner membrane. It carries out the reaction thiamine(out) + ATP + H2O = thiamine(in) + ADP + phosphate + H(+). Its function is as follows. Part of the ABC transporter complex ThiBPQ involved in thiamine import. Responsible for energy coupling to the transport system. The sequence is that of Thiamine import ATP-binding protein ThiQ from Escherichia coli O157:H7.